The following is a 150-amino-acid chain: UPF0756 membrane protein HDEF_0364 (150 aa).

5 helical membrane-spanning segments follow: residues 1-21 (MMFFSSTFFVLLLFAILGLIS), 28-48 (ISVVCLFFLSFIYPNLIFPWV), 51-71 (YALKAGILILTIAVLAPIASG), 88-108 (ILGILIGVFVSWLGGRGVSLM), and 123-143 (ILGVAFFKGVPVGPLIAAGLL).

The protein belongs to the UPF0756 family.

Its subcellular location is the cell membrane. The sequence is that of UPF0756 membrane protein HDEF_0364 from Hamiltonella defensa subsp. Acyrthosiphon pisum (strain 5AT).